A 1625-amino-acid chain; its full sequence is MPLSGWPKGGYEVRLWYVHVPERYFIYMAADWNPRHAPINIGYPSRTTMNPSSQLLVQQLAAVLEVDTAELDLNSGFVHNGGNSLSAVEFVSRSKSLGVSLSIASILSSTNLRALFTDLLSSESNLIPIPDPSDDSDDLSNPSSSTGGSPRVATPISSNVSTAAEDDYLTQGSVLTQYATQSLSEMQASLLHGSLKSPGTNIIYHYETYQTDVIPVLKRAWKTVIEGEPIFHSSLLDGSARNQEYFTWSEVTVETEAEYREQLQTLWLKSVSSSFKVVHWKRSPPASSQSTVIWAVHHALVDGYSAMLLFCKVRRAIKGLPIVPGPSFSDVEKRIRVWRQEHKSQGDEYWAGHAAQLDQAQGELLLPAPTPEGTSSAITESEEVYVAPSVSNTQLHCVAKRLGVTLSTCYYAAWSLVLSLYADSASVVFGAVLAGRNLPLEGVDEVVGPLVNTLPLCLTLSRQQSAQDFLKNLFSRMVELAEYQWTTPDNGYTRNFSSAMAMQVPGPECKDGVSPIEPPYTRQTTDVPLSINILTDGAARFVYHTSQYSRADIVRLGKYFQRALQLLLRPHRPIEECLQGLLGCVDLQTLMGFGNCSSSLTTTVAIKEDLVTLFESAVSRNPMDVAVQKGNCHLTYQELDTHAGRVAATLRGYIQDGDVVCLHADRSVNWIVGIMGILKAGGVYCALDKALPQEARETIFSASGSRLFLVPSLSDQSFCPTDCDRLLVVEDLVKDDNVPITHRDSPRPQTDAYLCFTSGSTGKPKGVMCLHQGLVAFQRDLEVRLFAQPGRRVAQIMSVAFDGSIHEIFSALSYGAALVLQSGDDPFAHLSDVDSAILTPSMARVLNPADFERLSTVSTKVYLVGEPVTQDVCDRWSEQKTLYNMYGPTEGTCGATIKQLHPRQRVTIGPPNPSTRIYIMNQHQELVPPGVIGEIYIAGVQVARHYIGMPEQTAQRFVADPIIRIGERMYKTGDRGYWSEDGEVVCLGRTDRQIKLRGFRLDLDDLETRMIRAFPAVTAVALTRQGNHLIAAILPASTDVDAFSARVAQVLPPYATPRKILALDEFPTTKAGKRDYLAIAKLSAQAPVSTGRTLTSPMEKLVGDAFRDILQLGKDVALHTHSSFRELGGHSLLQLLLATRISQGVNRQVPLYVVAQHDRIDHLAAAIDSGLGLQQLVTTDPMGLGESAIAPIEREWWHKYQINESTSSFNVNFMAKIDDCLVDRARLVHACNEVMARHRVLRSRYIFSRAAGRVVRQYSPLAPRVQAVKTVNPWVEVNRPFSLSRSAPIRAVVSDSYFILTISHIVADLTTLQILLREISSHYQGGSLPSIPHTYMNSTLWYEKPTSCDLDFWSDCLGQLPDTTHLLGHGGYRRGYRGRSALCEVPPTTYQSMRHFLRQSSITAQQLSLATIALCLDDPSVPMPTETDIVLGIPYINRKSQEDLDVVGLFLEPLPVRISFGQETHNHEKASYLDTVQRSVRSSVGHAVHWDQLLEHLQVSTTPPDHPLFDVVVTFHSQSHSNGLELSAPGLRTCYTYAEGAKFRLLCEFSALSEDRLLLRLEYDTDCFTEENIQLLQARIPLALSLLVQNVPYDMIRQTLACPPETQPVKVLKPDVVFGTPLSDI.

One can recognise a Carrier 1 domain in the interval 47–123 (TTMNPSSQLL…ALFTDLLSSE (77 aa)). Position 84 is an O-(pantetheine 4'-phosphoryl)serine (serine 84). Residues 127 to 157 (IPIPDPSDDSDDLSNPSSSTGGSPRVATPIS) form a disordered region. Residues 286 to 567 (ASSQSTVIWA…KYFQRALQLL (282 aa)) form a condensation 1 region. The segment at 614-997 (FESAVSRNPM…GRTDRQIKLR (384 aa)) is adenylation. The Carrier 2 domain maps to 1096–1171 (SPMEKLVGDA…HLAAAIDSGL (76 aa)). Serine 1131 carries the post-translational modification O-(pantetheine 4'-phosphoryl)serine. The tract at residues 1195-1585 (EWWHKYQINE…LQARIPLALS (391 aa)) is condensation 2.

This sequence belongs to the NRP synthetase family.

Its pathway is mycotoxin biosynthesis. Functionally, nonribosomal peptide synthetase; part of the gene cluster that mediates the biosynthesis of aspirochlorine (or antibiotic A30641), an unusual halogenated spiro compound with distinctive antifungal properties due to selective inhibition of protein biosynthesis, and which is also active against bacteria, viruses, and murine tumor cells. The non-ribosomal peptide synthetase (NRPS) aclP is responsible the formation of the diketopiperazine (DKP) core from the condensation of 2 phenylalanine residues. One Phe residue is tailored into chlorotyrosine by hydroxylation and chlorination, whereas the second Phe undergoes an unprecedented C-C bond cleavage to be converted into glycine. After formation of the DKP, sulfur is incorporated into the DKP by conjugation with glutathione by aclG, followed by its stepwise degradation to the thiol by aclI, aclJ and aclK, and the dithiol oxidation by aclT. In addition, oxygenases (aclB, aclC, aclL and aclO) and O-methyltransferases (aclM and aclU) act as tailoring enzymes to produce the intermediate dechloroaspirochlorine. Ultimately, chlorination of dechloroaspirochlorine by the halogenase aclH is the last step in the aspirochlorine pathway. The polypeptide is Nonribosomal peptide synthetase aclP (Aspergillus oryzae (strain ATCC 42149 / RIB 40) (Yellow koji mold)).